We begin with the raw amino-acid sequence, 319 residues long: ATP-dependent 6-phosphofructokinase (319 aa).

Gly-11 is an ATP binding site. 21 to 25 is an ADP binding site; sequence RAVVR. ATP contacts are provided by residues 72 to 73 and 102 to 105; these read RC and GNGS. Residue Asn-103 coordinates Mg(2+). 125-127 provides a ligand contact to substrate; it reads TID. The active-site Proton acceptor is Asp-127. An ADP-binding site is contributed by Arg-154. Substrate is bound by residues Arg-162 and 169 to 171; that span reads MGR. ADP contacts are provided by residues 185–187, Arg-211, and 213–215; these read GAE and KMH. Substrate is bound by residues Glu-222, Arg-243, and 249-252; that span reads HIQR.

This sequence belongs to the phosphofructokinase type A (PFKA) family. ATP-dependent PFK group I subfamily. Prokaryotic clade 'B1' sub-subfamily. Homotetramer. It depends on Mg(2+) as a cofactor.

The protein resides in the cytoplasm. The catalysed reaction is beta-D-fructose 6-phosphate + ATP = beta-D-fructose 1,6-bisphosphate + ADP + H(+). It participates in carbohydrate degradation; glycolysis; D-glyceraldehyde 3-phosphate and glycerone phosphate from D-glucose: step 3/4. With respect to regulation, allosterically activated by ADP and other diphosphonucleosides, and allosterically inhibited by phosphoenolpyruvate. Functionally, catalyzes the phosphorylation of D-fructose 6-phosphate to fructose 1,6-bisphosphate by ATP, the first committing step of glycolysis. This is ATP-dependent 6-phosphofructokinase from Clostridium acetobutylicum (strain ATCC 824 / DSM 792 / JCM 1419 / IAM 19013 / LMG 5710 / NBRC 13948 / NRRL B-527 / VKM B-1787 / 2291 / W).